An 80-amino-acid polypeptide reads, in one-letter code: Acyl carrier protein (80 aa).

Positions 4-79 constitute a Carrier domain; it reads EAILEKVRSI…DAVKYIEDKQ (76 aa). Residue Ser-39 is modified to O-(pantetheine 4'-phosphoryl)serine.

The protein belongs to the acyl carrier protein (ACP) family. 4'-phosphopantetheine is transferred from CoA to a specific serine of apo-ACP by AcpS. This modification is essential for activity because fatty acids are bound in thioester linkage to the sulfhydryl of the prosthetic group.

It is found in the cytoplasm. The protein operates within lipid metabolism; fatty acid biosynthesis. Carrier of the growing fatty acid chain in fatty acid biosynthesis. The protein is Acyl carrier protein of Prochlorococcus marinus (strain MIT 9313).